A 957-amino-acid chain; its full sequence is UvrABC system protein A (957 aa).

ATP is bound at residue 33-40 (GLSGSGKS). The C4-type zinc-finger motif lies at 252–279 (CPQCGFSIPELEPRMFSFNSPFGACPTC). ABC transporter domains are found at residues 309–587 (WEPI…AKSL) and 607–935 (PNGR…KYLR). 639–646 (GVSGSGKS) provides a ligand contact to ATP. Residues 738–764 (CEACRGDGIIKIEMHFLPDVYVPCEVC) form a C4-type zinc finger.

Belongs to the ABC transporter superfamily. UvrA family. As to quaternary structure, forms a heterotetramer with UvrB during the search for lesions.

The protein resides in the cytoplasm. Functionally, the UvrABC repair system catalyzes the recognition and processing of DNA lesions. UvrA is an ATPase and a DNA-binding protein. A damage recognition complex composed of 2 UvrA and 2 UvrB subunits scans DNA for abnormalities. When the presence of a lesion has been verified by UvrB, the UvrA molecules dissociate. In Halalkalibacterium halodurans (strain ATCC BAA-125 / DSM 18197 / FERM 7344 / JCM 9153 / C-125) (Bacillus halodurans), this protein is UvrABC system protein A.